Consider the following 374-residue polypeptide: Gibberellin 3-beta-dioxygenase 1 (374 aa).

Positions 206–307 (KACAALQLNS…RFSVAYLYGP (102 aa)) constitute a Fe2OG dioxygenase domain. Residues histidine 231, aspartate 233, and histidine 288 each contribute to the Fe cation site. The active site involves arginine 298. Arginine 298 is a 2-oxoglutarate binding site.

Belongs to the iron/ascorbate-dependent oxidoreductase family. GA3OX subfamily. L-ascorbate is required as a cofactor. Fe(2+) serves as cofactor. As to expression, expressed in radicles, roots, internodes, cotyledons, leaves and shoots. Barely detected in developing seeds. Not detected in flowers or young fruits.

It catalyses the reaction gibberellin A20 + 2-oxoglutarate + O2 = gibberellin A1 + succinate + CO2. It participates in plant hormone biosynthesis; gibberellin biosynthesis. Converts the inactive gibberellin (GA) precursors GA9 and GA20 in the bioactives gibberellins GA4 and GA1. Has a small activity on GA29, producing GA8. Unable to convert GA20 to GA5, GA5 to GA3 or GA12 to GA14. Involved in the production of bioactive GA for vegetative growth and development, but not for the 3-beta-hydroxylation of GA in developing seeds. The chain is Gibberellin 3-beta-dioxygenase 1 (LE) from Pisum sativum (Garden pea).